Reading from the N-terminus, the 367-residue chain is Ribosomal RNA large subunit methyltransferase M (367 aa).

S-adenosyl-L-methionine contacts are provided by residues Ser189, 222-225 (CPGG), Asp241, Asp261, and Asp278. Lys307 functions as the Proton acceptor in the catalytic mechanism.

This sequence belongs to the class I-like SAM-binding methyltransferase superfamily. RNA methyltransferase RlmE family. RlmM subfamily. Monomer.

It is found in the cytoplasm. The catalysed reaction is cytidine(2498) in 23S rRNA + S-adenosyl-L-methionine = 2'-O-methylcytidine(2498) in 23S rRNA + S-adenosyl-L-homocysteine + H(+). Functionally, catalyzes the 2'-O-methylation at nucleotide C2498 in 23S rRNA. In Shewanella denitrificans (strain OS217 / ATCC BAA-1090 / DSM 15013), this protein is Ribosomal RNA large subunit methyltransferase M.